A 262-amino-acid polypeptide reads, in one-letter code: 5'-nucleotidase SurE (262 aa).

A divalent metal cation contacts are provided by D11, D12, S43, and N101. The span at 220-229 shows a compositional bias: basic and acidic residues; that stretch reads SAGDGPKEWP. The segment at 220–246 is disordered; sequence SAGDGPKEWPSDVSQIETNSPSLTPIQ. A compositionally biased stretch (polar residues) spans 231-244; the sequence is DVSQIETNSPSLTP.

The protein belongs to the SurE nucleotidase family. The cofactor is a divalent metal cation.

It localises to the cytoplasm. It carries out the reaction a ribonucleoside 5'-phosphate + H2O = a ribonucleoside + phosphate. Nucleotidase that shows phosphatase activity on nucleoside 5'-monophosphates. The polypeptide is 5'-nucleotidase SurE (Prochlorococcus marinus (strain SARG / CCMP1375 / SS120)).